The chain runs to 364 residues: Tripartite motif-containing protein 54 (364 aa).

Residues 26–82 (CPICLEMFSKPVVILPCQHNLCRKCANDVFQASNPLWQSRGSTTVSSGGRFRCPSCR) form an RING-type zinc finger. The B box-type zinc finger occupies 121-163 (EQHLMCEEHEDEKINIYCLSCEVPTCSLCKVFGAHKDCEVAPL). Residues Cys126, His129, Cys149, and His155 each contribute to the Zn(2+) site. The interval 168-211 (KRQKSELSDGIAMLVAGNDRVQAVITQMEEVCQTIEDNSRRQKQ) is mediates microtubule-binding and homooligomerization. Residues 194-252 (QMEEVCQTIEDNSRRQKQLLNQKFETLCAVLEERKGELLQALARVQEEKLQRVRSLIRQ) adopt a coiled-coil conformation. Residues 271 to 329 (MEEPQMALYLQQAKELINKVGAMSKVELAGRPEPGYESMEQFSVIVEHVAEMLRTIDFQ) form the COS domain. The segment at 328 to 364 (FQPGASGDEEDDEVTLDGEEGNTGLEEERLDGPEGLH) is disordered. The segment covering 334–347 (GDEEDDEVTLDGEE) has biased composition (acidic residues). The segment covering 353–364 (EEERLDGPEGLH) has biased composition (basic and acidic residues).

Homooligomer and heterooligomer. Interacts with TRIM63 and probably with TRIM55. Interacts with tubulin.

It localises to the cytoplasm. The protein resides in the cytoskeleton. It is found in the myofibril. Its subcellular location is the sarcomere. The protein localises to the z line. Its function is as follows. May bind and stabilize microtubules during myotubes formation. This Rattus norvegicus (Rat) protein is Tripartite motif-containing protein 54 (Trim54).